Reading from the N-terminus, the 416-residue chain is Formyl-CoA:oxalate CoA-transferase (416 aa).

Residues 17-18, Arg-38, 72-75, 96-98, His-104, and 137-140 each bind CoA; these read QS, LNTK, NFH, and KAYE. Catalysis depends on Asp-169, which acts as the Nucleophile. 248–250 serves as a coordination point for substrate; it reads GGQ. 273–275 is a binding site for CoA; that stretch reads QEQ.

This sequence belongs to the CoA-transferase III family. Frc subfamily. Homodimer.

The catalysed reaction is formyl-CoA + oxalate = oxalyl-CoA + formate. It functions in the pathway metabolic intermediate degradation; oxalate degradation; CO(2) and formate from oxalate: step 1/2. Involved in the catabolism of oxalate and in the adapatation to low pH via the induction of the oxalate-dependent acid tolerance response (ATR). Catalyzes the transfer of the CoA moiety from formyl-CoA to oxalate. This chain is Formyl-CoA:oxalate CoA-transferase, found in Escherichia coli O81 (strain ED1a).